The sequence spans 818 residues: Protein TOC75-3, chloroplastic (818 aa).

The N-terminal 79 residues, 1 to 79 (MAAFSVNGQL…LKNLAKPLAV (79 aa)), are a transit peptide targeting the chloroplast. Residues 15-41 (TSSTASTSLSSRRKFLSPSSSRLPRIS) show a composition bias toward low complexity. The tract at residues 15 to 67 (TSSTASTSLSSRRKFLSPSSSRLPRISTQSPRVPSIKCSKSLPNRDTETSSKD) is disordered. Positions 57 to 67 (PNRDTETSSKD) are enriched in basic and acidic residues. Residues 80-140 (ASVSSAASFF…KLFSPSPAVA (61 aa)) constitute a chloroplast; outer membrane transit peptide. POTRA domains lie at 141–246 (DEEQ…FAES), 247–364 (TWQS…VVEG), and 365–448 (DITQ…LKEL). Residues 141-473 (DEEQSPDWDS…GRGGAPTLAS (333 aa)) lie on the Chloroplast intermembrane side of the membrane. The chain crosses the membrane as a beta stranded span at residues 474–482 (FQPGGSVTF). The Cytoplasmic portion of the chain corresponds to 483-509 (EHRNLQGLNRSLMGSVTTSNFLNPQDD). Residues 510–518 (LSFKLEYVH) form a beta stranded membrane-spanning segment. Residues 519–562 (PYLDGVYNPRNRTFKTSCFNSRKLSPVFTGGPGVEEVPPIWVDR) lie on the Chloroplast intermembrane side of the membrane. Residues 563 to 570 (AGVKANIT) traverse the membrane as a beta stranded segment. The Cytoplasmic segment spans residues 571–578 (ENFTRQSK). A beta stranded membrane pass occupies residues 579 to 586 (FTYGLVME). Over 587-693 (EITTRDESSH…VEQGAGKSPP (107 aa)) the chain is Chloroplast intermembrane. Residues 694–702 (PVLVLHGHY) traverse the membrane as a beta stranded segment. The Cytoplasmic segment spans residues 703-714 (GGCVGDLPSYDA). A beta stranded transmembrane segment spans residues 715–723 (FVLGGPYSV). At 724-785 (RGYNMGELGA…VYRRTGQGSS (62 aa)) the chain is on the chloroplast intermembrane side. A beta stranded transmembrane segment spans residues 786 to 792 (YGAGVKL). The Cytoplasmic segment spans residues 793–806 (GLVRAEYAVDHNNG). A beta stranded transmembrane segment spans residues 807–814 (TGALFFRF). The Chloroplast intermembrane portion of the chain corresponds to 815–818 (GERY).

It belongs to the TOC75 family. Part of the TOC core complex that includes a protein for the specific recognition of transit peptides surrounded by a ring composed of four proteins forming translocation channels, and four to five GTP-binding proteins providing energy. This core complex can interact with components of the TIC complex to form a larger import complex. Chloroplastic protein precursors such as prSS (precursor of the RuBisCO small subunit) also interact with these complexes. The TOC complex contains a specific subset of polar lipids such as digalactosyldiacylglyceride (DGDG), phosphatidylcholine (PC) and phosphatidylglycerol (PG). TOC75-3 interacts with TOC34/OEP34, TOC159/TOC86, TOC132 and TOC120. Interacts with SP1. Interacts with TIC236. Mostly expressed in young and actively dividing photosynthetic tissues and, to a lower extent, in old leaves and roots. Particularly low levels in leaves after etiolation.

Its subcellular location is the plastid. The protein resides in the chloroplast outer membrane. Essential protein. Mediates the insertion of proteins targeted to the outer membrane of chloroplasts. Required for the import of protein precursors into chloroplasts. Forms the voltage-dependent preprotein translocation channels (hydrophilic beta barrel) of the TOC complex in the chloroplastic outer membrane. In Arabidopsis thaliana (Mouse-ear cress), this protein is Protein TOC75-3, chloroplastic.